Here is a 417-residue protein sequence, read N- to C-terminus: Calreticulin (417 aa).

The N-terminal stretch at 1-17 is a signal peptide; it reads MLLPVPLLLGLLGLAAA. The interval 18–197 is N-domain; that stretch reads DPTVYFKEQF…NSQVESGSLE (180 aa). Glutamine 26 contacts Ca(2+). Lysine 48 is subject to N6-acetyllysine. Ca(2+) contacts are provided by lysine 62 and lysine 64. Residue lysine 64 is modified to N6-(2-hydroxyisobutyryl)lysine. Tyrosine 109, lysine 111, tyrosine 128, and aspartate 135 together coordinate an alpha-D-glucoside. The cysteines at positions 137 and 163 are disulfide-linked. At lysine 159 the chain carries N6-acetyllysine. The N-linked (GlcNAc...) asparagine glycan is linked to asparagine 179. Residues 191–202 form a 1-1 repeat; the sequence is VESGSLEDDWDF. The segment at 191–255 is 4 X approximate repeats; it reads VESGSLEDDW…DAKKPEDWDE (65 aa). The disordered stretch occupies residues 193 to 270; that stretch reads SGSLEDDWDF…WEPPVIQNPE (78 aa). The tract at residues 198–308 is P-domain; that stretch reads DDWDFLPPKK…YSPDSNIYAY (111 aa). The span at 207 to 251 shows a compositional bias: basic and acidic residues; the sequence is KIKDPDAAKPEDWDDRAKIDDPTDSKPEDWDKPEHIPDPDAKKPE. At lysine 209 the chain carries N6-acetyllysine. 6 consecutive repeat copies span residues 210-221, 227-238, 244-255, 259-269, 273-283, and 287-297. The segment at 237–270 is interaction with PPIB; sequence DKPEHIPDPDAKKPEDWDEEMDGEWEPPVIQNPE. The span at 252–261 shows a compositional bias: acidic residues; sequence DWDEEMDGEW. The tract at residues 259–297 is 3 X approximate repeats; it reads GEWEPPVIQNPEYKGEWKPRQIDNPEYKGIWIHPEIDNP. The tract at residues 309–417 is C-domain; the sequence is ENFAVLGLDL…AAAGQAKDEL (109 aa). Aspartate 317 contacts an alpha-D-glucoside. Aspartate 328 is a Ca(2+) binding site. Residues 350–417 form a disordered region; that stretch reads TKAAEKQMKD…AAAGQAKDEL (68 aa). The span at 352–378 shows a compositional bias: basic and acidic residues; it reads AAEKQMKDKQDEEQRLHEEEEEKKGKE. Over residues 379 to 408 the composition is skewed to acidic residues; that stretch reads EEEADKDDDEDKDEDEEDEDEKEEEEEEDA. The Prevents secretion from ER signature appears at 414–417; sequence KDEL.

Belongs to the calreticulin family. As to quaternary structure, monomer. Component of an EIF2 complex at least composed of CELF1/CUGBP1, CALR, CALR3, EIF2S1, EIF2S2, HSP90B1 and HSPA5. Interacts with PDIA3/ERp57 and SPACA9. Interacts with TRIM21. Interacts with NR3C1. Interacts with PPIB. Interacts (via P-domain) with PDIA5. Interacts with GABARAP. Interacts with CLCC1.

The protein resides in the endoplasmic reticulum lumen. Its subcellular location is the cytoplasm. The protein localises to the cytosol. It localises to the secreted. It is found in the extracellular space. The protein resides in the extracellular matrix. Its subcellular location is the cell surface. The protein localises to the sarcoplasmic reticulum lumen. It localises to the cytoplasmic vesicle. It is found in the secretory vesicle. The protein resides in the cortical granule. Its subcellular location is the cytolytic granule. Calcium-binding chaperone that promotes folding, oligomeric assembly and quality control in the endoplasmic reticulum (ER) via the calreticulin/calnexin cycle. This lectin interacts transiently with almost all of the monoglucosylated glycoproteins that are synthesized in the ER. Interacts with the DNA-binding domain of NR3C1 and mediates its nuclear export. Involved in maternal gene expression regulation. May participate in oocyte maturation via the regulation of calcium homeostasis. Present in the cortical granules of non-activated oocytes, is exocytosed during the cortical reaction in response to oocyte activation and might participate in the block to polyspermy. In Bos taurus (Bovine), this protein is Calreticulin (CALR).